The primary structure comprises 1740 residues: DNA polymerase (1740 aa).

The disordered stretch occupies residues 472–491; it reads IEMPHNQEDSDSEKEDEDTD. A compositionally biased stretch (acidic residues) spans 480–491; sequence DSDSEKEDEDTD. A DOD-type homing endonuclease domain is found at 1189 to 1334; it reads VWGFFMGDGS…LFYLLKSLGY (146 aa). Residues 1673-1701 form a disordered region; that stretch reads PKESGSKTAKKPYQSQKLQKTKSSNKSQI. The span at 1685 to 1700 shows a compositional bias: polar residues; sequence YQSQKLQKTKSSNKSQ.

It belongs to the DNA polymerase type-B family. In terms of processing, this protein undergoes a protein self splicing that involves a post-translational excision of the intervening region (intein) followed by peptide ligation.

It catalyses the reaction DNA(n) + a 2'-deoxyribonucleoside 5'-triphosphate = DNA(n+1) + diphosphate. The polypeptide is DNA polymerase (POLB) (Acanthamoeba polyphaga (Amoeba)).